The following is an 81-amino-acid chain: UPF0180 protein ABC2430 (81 aa).

It belongs to the UPF0180 family.

The polypeptide is UPF0180 protein ABC2430 (Shouchella clausii (strain KSM-K16) (Alkalihalobacillus clausii)).